A 667-amino-acid polypeptide reads, in one-letter code: DNA ligase (667 aa).

NAD(+) contacts are provided by residues 32-36 and 80-81; these read DKDYD and SL. The active-site N6-AMP-lysine intermediate is Lys121. Arg143, Glu178, and Lys314 together coordinate NAD(+). Zn(2+) contacts are provided by Cys407, Cys410, Cys423, and Cys429. Residues 587–667 form the BRCT domain; sequence IVESIFKDKT…EFEKMLGRES (81 aa).

Belongs to the NAD-dependent DNA ligase family. LigA subfamily. Mg(2+) is required as a cofactor. Requires Mn(2+) as cofactor.

The catalysed reaction is NAD(+) + (deoxyribonucleotide)n-3'-hydroxyl + 5'-phospho-(deoxyribonucleotide)m = (deoxyribonucleotide)n+m + AMP + beta-nicotinamide D-nucleotide.. Functionally, DNA ligase that catalyzes the formation of phosphodiester linkages between 5'-phosphoryl and 3'-hydroxyl groups in double-stranded DNA using NAD as a coenzyme and as the energy source for the reaction. It is essential for DNA replication and repair of damaged DNA. The chain is DNA ligase from Clostridium botulinum (strain Eklund 17B / Type B).